The sequence spans 293 residues: Ribosomal protein L11 methyltransferase (293 aa).

S-adenosyl-L-methionine contacts are provided by T145, G166, D188, and N230.

It belongs to the methyltransferase superfamily. PrmA family.

It localises to the cytoplasm. The enzyme catalyses L-lysyl-[protein] + 3 S-adenosyl-L-methionine = N(6),N(6),N(6)-trimethyl-L-lysyl-[protein] + 3 S-adenosyl-L-homocysteine + 3 H(+). Its function is as follows. Methylates ribosomal protein L11. The chain is Ribosomal protein L11 methyltransferase from Shewanella sediminis (strain HAW-EB3).